The following is a 325-amino-acid chain: Leucine-rich repeat protein FLOR 1 (325 aa).

LRR repeat units lie at residues asparagine 65–aspartate 88, leucine 89–leucine 114, lysine 115–serine 140, threonine 142–methionine 162, proline 163–serine 185, valine 187–tyrosine 211, phenylalanine 213–arginine 233, asparagine 234–phenylalanine 256, alanine 257–lysine 280, and leucine 281–threonine 305.

This sequence belongs to the polygalacturonase-inhibiting protein family. As to quaternary structure, interacts with MADS domain transcription factors during flower development. Component of a complex made of FLOR1, VSP1 and AGAMOUS (AG). Binds directly with AG. In terms of tissue distribution, confined to flowers and inflorescences (e.g. inflorescence meristems, floral meristems, stamens and carpels).

The protein localises to the cytoplasm. The protein resides in the nucleus. It is found in the perinuclear region. Its subcellular location is the cell membrane. Its function is as follows. Promotes flowering transition in long days (LD). The chain is Leucine-rich repeat protein FLOR 1 from Arabidopsis thaliana (Mouse-ear cress).